We begin with the raw amino-acid sequence, 1167 residues long: Carbamoyl phosphate synthase large chain (1167 aa).

The interval 1-455 is carboxyphosphate synthetic domain; sequence MPRRTDIKSI…SLQKALRGLE (455 aa). Residues R129, R221, G227, G228, E260, V262, E267, G293, V294, H295, Q337, and E351 each coordinate ATP. The 197-residue stretch at 184 to 380 folds into the ATP-grasp 1 domain; sequence LETRWNLGEG…IAKIAAKLAV (197 aa). Mg(2+)-binding residues include Q337, E351, and N353. Q337, E351, and N353 together coordinate Mn(2+). The interval 456 to 619 is oligomerization domain; it reads TGLTGLDEIE…PFAGALANEA (164 aa). The tract at residues 620–1031 is carbamoyl phosphate synthetic domain; it reads QVSSRKKVVI…AFAKSQLGAG (412 aa). The 213-residue stretch at 748–960 folds into the ATP-grasp 2 domain; the sequence is QKLLHKLGLS…IAKIAARIMA (213 aa). The ATP site is built by R784, T844, L846, E851, G876, I877, H878, S879, Q919, and E931. The Mg(2+) site is built by Q919, E931, and N933. Mn(2+) contacts are provided by Q919, E931, and N933. An MGS-like domain is found at 1032–1167; the sequence is VDLPRSGTLF…EVRPLQEYFA (136 aa). The interval 1032–1167 is allosteric domain; the sequence is VDLPRSGTLF…EVRPLQEYFA (136 aa).

It belongs to the CarB family. Composed of two chains; the small (or glutamine) chain promotes the hydrolysis of glutamine to ammonia, which is used by the large (or ammonia) chain to synthesize carbamoyl phosphate. Tetramer of heterodimers (alpha,beta)4. Requires Mg(2+) as cofactor. It depends on Mn(2+) as a cofactor.

It carries out the reaction hydrogencarbonate + L-glutamine + 2 ATP + H2O = carbamoyl phosphate + L-glutamate + 2 ADP + phosphate + 2 H(+). The catalysed reaction is hydrogencarbonate + NH4(+) + 2 ATP = carbamoyl phosphate + 2 ADP + phosphate + 2 H(+). It participates in amino-acid biosynthesis; L-arginine biosynthesis; carbamoyl phosphate from bicarbonate: step 1/1. The protein operates within pyrimidine metabolism; UMP biosynthesis via de novo pathway; (S)-dihydroorotate from bicarbonate: step 1/3. Functionally, large subunit of the glutamine-dependent carbamoyl phosphate synthetase (CPSase). CPSase catalyzes the formation of carbamoyl phosphate from the ammonia moiety of glutamine, carbonate, and phosphate donated by ATP, constituting the first step of 2 biosynthetic pathways, one leading to arginine and/or urea and the other to pyrimidine nucleotides. The large subunit (synthetase) binds the substrates ammonia (free or transferred from glutamine from the small subunit), hydrogencarbonate and ATP and carries out an ATP-coupled ligase reaction, activating hydrogencarbonate by forming carboxy phosphate which reacts with ammonia to form carbamoyl phosphate. The chain is Carbamoyl phosphate synthase large chain from Mesorhizobium japonicum (strain LMG 29417 / CECT 9101 / MAFF 303099) (Mesorhizobium loti (strain MAFF 303099)).